A 220-amino-acid chain; its full sequence is Claudin-22 (220 aa).

Topologically, residues Met1 to Gln10 are cytoplasmic. Residues Leu11 to Leu30 form a helical membrane-spanning segment. Residues Pro31–Arg81 lie on the Extracellular side of the membrane. A helical membrane pass occupies residues Ile82–Leu102. Over Asp103–Arg117 the chain is Cytoplasmic. Residues Leu118–Ser138 form a helical membrane-spanning segment. Residues Trp139–Glu164 lie on the Extracellular side of the membrane. The helical transmembrane segment at Ala165 to Cys185 threads the bilayer. The Cytoplasmic portion of the chain corresponds to Ala186–His220.

Belongs to the claudin family.

Its subcellular location is the cell junction. It localises to the tight junction. The protein resides in the cell membrane. Plays a major role in tight junction-specific obliteration of the intercellular space, through calcium-independent cell-adhesion activity. The polypeptide is Claudin-22 (CLDN22) (Homo sapiens (Human)).